A 1081-amino-acid chain; its full sequence is Teashirt homolog 3 (1081 aa).

Disordered regions lie at residues 141–161 and 238–257; these read PSSEKNNGSSSSSSSSSSSCG and HYRDDNHETDNNNPKRWSKP. The segment covering 148-161 has biased composition (low complexity); the sequence is GSSSSSSSSSSSCG. C2H2-type zinc fingers lie at residues 214–238 and 275–299; these read FRCKDCSAAYDTLVELTVHMNETGH and LKCMYCGHSFESLQDLSVHMIKTKH. The segment covering 238-247 has biased composition (basic and acidic residues); that stretch reads HYRDDNHETD. A disordered region spans residues 325–364; sequence SLELELPSSPDSTGGTPKATISDTNDALQKNSNPYITPNN. Over residues 335-364 the composition is skewed to polar residues; sequence DSTGGTPKATISDTNDALQKNSNPYITPNN. The C2H2-type 3; atypical zinc-finger motif lies at 386–404; the sequence is LKCMECGSSHDTLQELTAH. The span at 473 to 491 shows a compositional bias: basic and acidic residues; that stretch reads EVDKEKAVTDEKPKQKDKP. Disordered stretches follow at residues 473–502, 579–604, 626–687, and 855–897; these read EVDKEKAVTDEKPKQKDKPGEEEEKCDISS, NSEIVSPTKNQTLVSPPSSQTSPMPK, EKMK…LAEP, and TESH…RQSN. Over residues 581-603 the composition is skewed to polar residues; that stretch reads EIVSPTKNQTLVSPPSSQTSPMP. A coiled-coil region spans residues 606–630; the sequence is NFHAMEELVKKVTEKVAKVEEKMKE. Position 682 is a phosphoserine (Ser-682). Over residues 856-869 the composition is skewed to low complexity; that stretch reads ESHTSKSSTPSSIS. The homeobox; atypical DNA-binding region spans 891–961; sequence RKGRQSNWNP…NVKYQLRRTG (71 aa). C2H2-type zinc fingers lie at residues 976–998 and 1041–1064; these read FFCNDCASQIRTPSTYISHLESH and YQCKLCNRTFASKHAVKLHLSKTH.

This sequence belongs to the teashirt C2H2-type zinc-finger protein family. As to quaternary structure, interacts (via homeobox domain) with APBB1 (via PID domain 1). Interacts (via N-terminus) with HDAC1 and HDAC2; the interaction is direct. Found in a trimeric complex with APBB1 and HDAC1; the interaction between HDAC1 and APBB1 is mediated by TSHZ3. In terms of tissue distribution, expressed in brain; strongly reduced in post-mortem elderly subjects with Alzheimer disease. Expressed in the fetal neocortex.

It localises to the nucleus. The protein resides in the cell projection. The protein localises to the growth cone. In terms of biological role, transcriptional regulator involved in developmental processes. Functions in association with APBB1, SET and HDAC factors as a transcriptional repressor, that inhibits the expression of CASP4. TSHZ3-mediated transcription repression involves the recruitment of histone deacetylases HDAC1 and HDAC2. Associates with chromatin in a region surrounding the CASP4 transcriptional start site(s). Regulates the development of neurons involved in both respiratory rhythm and airflow control. Promotes maintenance of nucleus ambiguus (nA) motoneurons, which govern upper airway function, and establishes a respiratory rhythm generator (RRG) activity compatible with survival at birth. Involved in the differentiation of the proximal uretic smooth muscle cells during developmental processes. Involved in the up-regulation of myocardin, that directs the expression of smooth muscle cells in the proximal ureter. Involved in the modulation of glutamatergic synaptic transmission and long-term synaptic potentiation. This chain is Teashirt homolog 3 (TSHZ3), found in Homo sapiens (Human).